The sequence spans 264 residues: MGNLSGWFIHCPPLQWTLDQLETMMINTIKRGKVPQHIAFVMDGNRRWARQRRMETIEGHSSGFEALKSLLKVCLKLGVKEVSAFTFSIENFKRSKYEVDMLMEIAKNSLTQITAHGDLVDQYGIRIRIVGDLSRLQPDVLETALKAVEITKHNTKATLNVCFPYTSRHEIATSVQSIVKMAEDGTITPEDIDEDIFEKNLLIKDSLPLDLLIRTSGVERLSDFMLWQCHKNTEIKFIDFYWPDFSIWKFFPMLIQYQLQNQPA.

This sequence belongs to the UPP synthase family. Forms an active dehydrodolichyl diphosphate synthase complex with nus1. Mg(2+) is required as a cofactor.

It is found in the endoplasmic reticulum membrane. It catalyses the reaction n isopentenyl diphosphate + (2E,6E)-farnesyl diphosphate = a di-trans,poly-cis-polyprenyl diphosphate + n diphosphate. It functions in the pathway protein modification; protein glycosylation. In terms of biological role, with nus1, forms the dehydrodolichyl diphosphate synthase (DDS) complex, an essential component of the dolichol monophosphate (Dol-P) biosynthetic machinery. Adds multiple copies of isopentenyl pyrophosphate (IPP) to farnesyl pyrophosphate (FPP) to produce dehydrodolichyl diphosphate (Dedol-PP), a precursor of dolichol which is utilized as a sugar carrier in protein glycosylation in the endoplasmic reticulum (ER). The polypeptide is Dehydrodolichyl diphosphate synthase complex subunit SPAC4D7.04c (Schizosaccharomyces pombe (strain 972 / ATCC 24843) (Fission yeast)).